The following is a 350-amino-acid chain: MEAIRKELSRSYQELNDETDPIARDPEGAQEEEQEEAASAVVPDRDSDRSNTRVHFSRTCLKNVFSVLLIFVYLLLMGVAVFLVYQTITDFRDKLKHPVMSVSYKEVNVYDAPGIALYPGKARLLSCKHHLYDHIPPLIDPGQPGENTCITQNISYTDPYTNSTVKHALIVQGPRDVRRRELVFLQFHLNETKQDFSAIDYLLFSSYDAFLKSTNRVRFMQDCESSFSSWKFSGGFRTWVKMSLVKTKEEDGSQSVEFRQETSVVNFIDRRENPDKGDQLFFVVFEWKDPYIQEIQDIITANPWSMIALLCSVFLVLFKAADFAKLSVKWMIKVRRRHLKKRTRELNHIS.

The segment at 1-51 (MEAIRKELSRSYQELNDETDPIARDPEGAQEEEQEEAASAVVPDRDSDRSN) is disordered. Residues 1-63 (MEAIRKELSR…VHFSRTCLKN (63 aa)) are Cytoplasmic-facing. The chain crosses the membrane as a helical span at residues 64–84 (VFSVLLIFVYLLLMGVAVFLV). The Extracellular portion of the chain corresponds to 85-297 (YQTITDFRDK…KDPYIQEIQD (213 aa)). A helical transmembrane segment spans residues 298 to 318 (IITANPWSMIALLCSVFLVLF). The Cytoplasmic portion of the chain corresponds to 319 to 350 (KAADFAKLSVKWMIKVRRRHLKKRTRELNHIS).

The protein belongs to the proton-activated chloride channel family.

It is found in the cell membrane. It catalyses the reaction chloride(in) = chloride(out). Functionally, chloride channel gated by pH that facilitates the entry of chloride ions into cells upon exposure to extracellular acidic pH. This Xenopus laevis (African clawed frog) protein is Proton-activated chloride channel.